The chain runs to 680 residues: MLTHKTCQARKKMQVSFVIRDAEEKQHRNGVNALQLDANNGKLYSAGRDAIIRVWNTRTDSSEKYIQSMEHHNDWVNDIVLCCNGRNLISASCDTTVKVWNAQKGFCMSTLRTHRDYVQALAYAKDREQVASAGLDKAIFLWDVNTLTALTASNNTVTTSSLTGSKDSIYSLAMNPSGTVIVSGSTENILRIWDPRTCMRSMKLRGHTENVRCLVVSPDGNQVVSGSSDGTIKVWNLGQQRCVQTIHVHKEGVWSLLMSENFQYIVSGSRDRNIIVTEMRNPSNKTLVCEEQAPVLSLGYNIDKTGVWATTWNSDIRCWKLPMYDRCTMNSSGGMDAQWTQGGTEVACIKGGAAIKECAVLNDKRYIITKDSQDQVVVYDVLRVVKKEQLGAVDYEAEVKKRNKQVYIPNWFTVDLKTGMPTIVLGQEEVDCFSAWVSIEAGLPECVDPTTEIKINYGKLLLEALLEYWTPPHSIPPNEMEPDMHGNGYFQVPKHTPVIFSEVGGRTVCRLLVRDAAGDSESTLLHETAPQWVTDVVIEKNIPKFLKIPFFLQPHPQMTKPERTKKDRLVANEFIQCRKVCEHVLEKVLNAETTPSGGNANNSLQNSQSDANSEGSQLPAEERIELWCNDVVVDPNMDLRTVRHFIWKQSTDLTFQYKTKQNFNYDGSIGDSLERVTRKY.

WD repeat units follow at residues glutamine 26 to tyrosine 65, histidine 71 to threonine 110, threonine 113 to alanine 152, glycine 164 to lysine 203, glycine 206 to threonine 245, valine 248 to leucine 287, glutamate 290 to methionine 329, and lysine 350 to glutamine 389. Positions glutamate 592–serine 616 are disordered.

Belongs to the WD repeat WDR48 family. In terms of assembly, catalytic component of the Usp12-46 deubiquitylase complex consisting of Usp12-46, Wdr20 and Uaf1; regulatory subunit that, together wtih Wdr20, stabilizes Usp12-46. The Usp12-46 deubiquitylase complex associates with arr/arrow; the interaction leads to deubiquitination and stabilization of arr/arrow.

Functionally, regulatory component of the Usp12-46 deubiquitylase complex. activates deubiquitination by increasing the catalytic turnover without increasing the affinity of deubiquitinating enzymes for the substrate. The complex deubiquitylates the wg/wingless-signaling receptor arr/arrow, which stabilizes the receptor and increases its concentration at the cell surface; this enhances the sensitivity of cells to wg/wingless-signal stimulation. This increases the amplitude and spatial range of the signaling response to the wg/wingless morphogen gradient, facilitating the precise concentration-dependent regulation of its target genes. Together with Wdr20 and Usp12-46 required for wg/wingless-mediated signaling in the wing imaginal disc and for wg/wingless-dependent regulation of intestinal stem cell proliferation. The chain is WD repeat-containing protein 48 homolog from Drosophila yakuba (Fruit fly).